The following is a 208-amino-acid chain: MSTVGNSTNIFWQESPIGKTERQKLLNQKGCVVWITGLSGSGKSTLACSLSRELNNRGKLSYILDGDNLRHGLNKDLGFKAEDRVENIRRVGEVAKLFADAGLICIASLISPYRKDRDACREMIQNSSFIEVFMNMSLQLCEARDPKGLYKLARAGKIKGFTGIDDPYESPLNCEIELKEKEGECPSPVAMAEEVISYLEDKGFLQNE.

37–45 (GLSGSGKST) lines the ATP pocket. Substrate is bound by residues aspartate 67, arginine 70, arginine 84, asparagine 87, 110-111 (IS), and glycine 160. Serine 111 (phosphoserine intermediate) is an active-site residue.

Belongs to the APS kinase family. As to expression, expressed in root vasculature, root tips, leaf epidermal and guard cells, pollen grains and radicle of immature seeds.

Its subcellular location is the cytoplasm. The protein localises to the cytosol. It carries out the reaction adenosine 5'-phosphosulfate + ATP = 3'-phosphoadenylyl sulfate + ADP + H(+). Its pathway is sulfur metabolism; hydrogen sulfide biosynthesis; sulfite from sulfate: step 2/3. Catalyzes the synthesis of activated sulfate for the sulfation of secondary metabolites, including the glucosinolates. Essential for plant reproduction and viability. The polypeptide is Adenylyl-sulfate kinase 3 (Arabidopsis thaliana (Mouse-ear cress)).